Reading from the N-terminus, the 159-residue chain is Nucleotide-binding protein Avin_13410 (159 aa).

It belongs to the YajQ family.

Its function is as follows. Nucleotide-binding protein. This is Nucleotide-binding protein Avin_13410 from Azotobacter vinelandii (strain DJ / ATCC BAA-1303).